A 141-amino-acid polypeptide reads, in one-letter code: Putative nickel-responsive regulator (141 aa).

4 residues coordinate Ni(2+): histidine 80, histidine 91, histidine 93, and cysteine 99.

This sequence belongs to the transcriptional regulatory CopG/NikR family. Ni(2+) serves as cofactor.

Its function is as follows. Transcriptional regulator. The chain is Putative nickel-responsive regulator from Methanococcus maripaludis (strain C6 / ATCC BAA-1332).